The chain runs to 345 residues: Growth hormone-inducible transmembrane protein (345 aa).

The N-terminal 45 residues, 1-45 (MLAARLVCLRTLPSRVFHPAFTKASPVVKNSITKNQWLLTPSREY), are a transit peptide targeting the mitochondrion. Topologically, residues 46-82 (ATKTRIGIRRGRTGQELKEAALEPSMEKIFKIDQMGR) are mitochondrial matrix. The helical transmembrane segment at 83-103 (WFVAGGAAVGLGALCYYGLGL) threads the bilayer. At 104-125 (SNEIGAIEKAVIWPQYVKDRIH) the chain is on the mitochondrial intermembrane side. Residues 126-146 (STYMYLAGSIGLTALSAIAIS) form a helical membrane-spanning segment. Over 147 to 159 (RTPVLMNFMMRGS) the chain is Mitochondrial matrix. Residues 160–180 (WVTIGVTFAAMVGAGMLVRSI) traverse the membrane as a helical segment. Over 181-190 (PYDQSPGPKH) the chain is Mitochondrial intermembrane. A helical transmembrane segment spans residues 191-211 (LAWLLHSGVMGAVVAPLTILG). At 212-213 (GP) the chain is on the mitochondrial matrix side. A helical membrane pass occupies residues 214 to 234 (LLIRAAWYTAGIVGGLSTVAM). At 235–244 (CAPSEKFLNM) the chain is on the mitochondrial intermembrane side. The chain crosses the membrane as a helical span at residues 245–265 (GAPLGVGLGLVFVSSLGSMFL). Residues 266 to 271 (PPTTVA) lie on the Mitochondrial matrix side of the membrane. A helical transmembrane segment spans residues 272–292 (GATLYSVAMYGGLVLFSMFLL). The Mitochondrial intermembrane portion of the chain corresponds to 293–345 (YDTQKVIKRAEVSPMYGVQKYDPINSMLSIYMDTLNIFMRVATMLATGGNRKK).

The protein belongs to the BI1 family. Interacts with LETM1. Interacts with AFG3L2. Post-translationally, undergoes AFG3L2-mediated proteolytic degradation, upon hyperpolarization of mitochondria.

The protein resides in the mitochondrion inner membrane. It carries out the reaction Ca(2+)(in) + 2 H(+)(out) = Ca(2+)(out) + 2 H(+)(in). It catalyses the reaction K(+)(in) + H(+)(out) = K(+)(out) + H(+)(in). In terms of biological role, plays an important role in maintenance of mitochondrial morphology and in mediating either calcium or potassium/proton antiport. Mediates proton-dependent calcium efflux from mitochondrion. Also functions as an electroneutral mitochondrial proton/potassium exchanger. Required for the mitochondrial tubular network and cristae organization. Involved in apoptotic release of cytochrome c. Inhibits the proteolytic activity of AFG3L2, stimulating respiration and stabilizing respiratory enzymes in actively respiring mitochondria. However, when mitochondria become hyperpolarized, GHITM loses its inhibitory activity toward AFG3L2 and the now the active AFG3L2 turns first on GHITM and, if hyperpolarization persists, on other proteins of the mitochondria, leading to a broad remodeling of the mitochondrial proteome. The sequence is that of Growth hormone-inducible transmembrane protein (GHITM) from Homo sapiens (Human).